Reading from the N-terminus, the 485-residue chain is Glutamyl-tRNA(Gln) amidotransferase subunit A (485 aa).

Residues lysine 79 and serine 154 each act as charge relay system in the active site. Serine 178 acts as the Acyl-ester intermediate in catalysis.

Belongs to the amidase family. GatA subfamily. In terms of assembly, heterotrimer of A, B and C subunits.

It carries out the reaction L-glutamyl-tRNA(Gln) + L-glutamine + ATP + H2O = L-glutaminyl-tRNA(Gln) + L-glutamate + ADP + phosphate + H(+). Its function is as follows. Allows the formation of correctly charged Gln-tRNA(Gln) through the transamidation of misacylated Glu-tRNA(Gln) in organisms which lack glutaminyl-tRNA synthetase. The reaction takes place in the presence of glutamine and ATP through an activated gamma-phospho-Glu-tRNA(Gln). The sequence is that of Glutamyl-tRNA(Gln) amidotransferase subunit A from Geobacillus thermodenitrificans (strain NG80-2).